Consider the following 107-residue polypeptide: UPF0145 protein YbjQ (107 aa).

It belongs to the UPF0145 family.

The sequence is that of UPF0145 protein YbjQ from Salmonella gallinarum (strain 287/91 / NCTC 13346).